Consider the following 93-residue polypeptide: UPF0223 protein SAG0995 (93 aa).

This sequence belongs to the UPF0223 family.

The polypeptide is UPF0223 protein SAG0995 (Streptococcus agalactiae serotype V (strain ATCC BAA-611 / 2603 V/R)).